The following is a 658-amino-acid chain: Transcription factor E2-alpha (658 aa).

Disordered regions lie at residues 42-82 (STQF…GTHY), 140-191 (SALS…YPAN), 276-313 (NPSV…GTAT), 331-372 (DHSS…SYDG), 460-558 (VPAQ…ERRV), and 628-658 (EEEK…VGHM). Residues 173-179 (PKKVRKV) carry the Nuclear localization signal motif. Positions 276–303 (NPSVTSSFSSTPAQYGVSSHTPPISTGD) are enriched in polar residues. The span at 333–344 (SSTNFSSTPSTP) shows a compositional bias: low complexity. Residues 345 to 355 (VGSPQGITGSG) show a composition bias toward polar residues. Over residues 493-507 (PDIKRESKEDEENRS) the composition is skewed to basic and acidic residues. Residues 533-544 (QDEDEDEDDDNL) are compositionally biased toward acidic residues. Basic and acidic residues predominate over residues 548–558 (QKAEREKERRV). The 54-residue stretch at 555 to 608 (ERRVANNARERLRVKDINEAFKELGRMCQLHLNSEKPQTKLLILHQAVSVILSL) folds into the bHLH domain.

Homodimer. Heterodimer; efficient DNA binding requires dimerization with another bHLH protein. Interacts with tgfb1i1.

It localises to the nucleus. Transcriptional regulator involved in the initiation of neuronal differentiation and mesenchymal to epithelial transition. Heterodimers between tcf3 and tissue-specific basic helix-loop-helix (bHLH) proteins play major roles in determining tissue-specific cell fate during embryogenesis, like muscle or early B-cell differentiation. Together with tcf15, required for the mesenchymal to epithelial transition. Dimers bind DNA on E-box motifs: 5'-CANNTG-3'. This Xenopus laevis (African clawed frog) protein is Transcription factor E2-alpha (tcf3).